The primary structure comprises 249 residues: Putative protein SNX29P2 (249 aa).

Disordered stretches follow at residues 109 to 171 and 188 to 249; these read QVTN…SNSW and DVKS…PGFK. The span at 156-170 shows a compositional bias: low complexity; the sequence is SPFGPNSNGSQSSNS. A compositionally biased stretch (acidic residues) spans 193 to 204; that stretch reads DDEDVDENEDDV. A compositionally biased stretch (polar residues) spans 226 to 242; it reads HSVTQAGVQWHDLSSLQ.

This sequence belongs to the sorting nexin family.

This Homo sapiens (Human) protein is Putative protein SNX29P2 (SNX29P2).